Consider the following 222-residue polypeptide: Protein Thf1 (222 aa).

Positions 169 to 208 form a coiled coil; sequence IEKVKRDLELYRSNLDKINQARSLMKELVEQERKRRAQQT. The tract at residues 197–222 is disordered; the sequence is VEQERKRRAQQTSAPPAVDASSDAPA. The span at 209 to 222 shows a compositional bias: low complexity; the sequence is SAPPAVDASSDAPA.

Belongs to the THF1 family.

May be involved in photosynthetic membrane biogenesis. The sequence is that of Protein Thf1 from Thermosynechococcus vestitus (strain NIES-2133 / IAM M-273 / BP-1).